The sequence spans 623 residues: DELLA protein RHT-1 (623 aa).

The disordered stretch occupies residues 1 to 27; it reads MKREYQDAGGSGGGGGGMGSSEDKMMV. The segment covering 9–19 has biased composition (gly residues); the sequence is GGSGGGGGGMG. Residues 38–42 carry the DELLA motif motif; the sequence is DELLA. Disordered stretches follow at residues 109–138 and 159–201; these read LNAP…GYFD and AGAT…GARS. Residues 111–120 are compositionally biased toward pro residues; the sequence is APPPPLPPAP. Low complexity-rich tracts occupy residues 121-131 and 181-201; these read QLNASTSSTVT and GGSS…GARS. The 395-residue stretch at 225–619 folds into the GRAS domain; the sequence is VDTQEAGIRL…RPLIATSAWR (395 aa). The segment at 232 to 288 is leucine repeat I (LRI); it reads IRLVHALLACAEAVQQENLSAAEALVKQIPLLAASQGGAMRKVAAYFGEALARRVFR. Residues 239-243 carry the LxCxE motif motif; that stretch reads LACAE. The interval 307-372 is VHIID; sequence HAHFYESCPY…GGPPSFRLTG (66 aa). The short motif at 338-342 is the VHIID element; it reads VHVVD. The leucine repeat II (LRII) stretch occupies residues 386 to 425; that stretch reads QVGWKLAQFAHTIRVDFQYRGLVAATLADLEPFMLQPEGE. Residues 435–540 are PFYRE; sequence IAVNSVFEMH…EVYLGRQICN (106 aa). Residues 543 to 619 are SAW; that stretch reads ACEGAERTER…RPLIATSAWR (77 aa).

Belongs to the GRAS family. DELLA subfamily. In terms of processing, phosphorylated. Post-translationally, ubiquitinated. Upon GA application it is ubiquitinated, leading to its subsequent degradation.

It localises to the nucleus. Probable transcriptional regulator that acts as a repressor of the gibberellin (GA) signaling pathway. Probably acts by participating in large multiprotein complexes that repress transcription of GA-inducible genes. Upon GA application, it is degraded by the proteasome, allowing the GA signaling pathway. This is DELLA protein RHT-1 (RHT1) from Triticum aestivum (Wheat).